Reading from the N-terminus, the 267-residue chain is MTATSSPTTRFTDRVVLITGGGSGLGRATAVRLAAEGAKLSLVDVSSEGLEASKAAVLETAPDAEVLTTVADVSDEAQVEAYVTATTERFGRIDGFFNNAGIEGKQNPTESFTAAEFDKVVSINLRGVFLGLEKVLKIMREQGSGMVVNTASVGGIRGIGNQSGYAAAKHGVVGLTRNSAVEYGRYGIRINAIAPGAIWTPMVENSMKQLDPENPRKAAEEFIQVNPSKRYGEAPEIAAVVAFLLSDDASYVNATVVPIDGGQSAAY.

17–42 (LITGGGSGLGRATAVRLAAEGAKLSL) serves as a coordination point for NAD(+). Ser152 contributes to the substrate binding site. Tyr165 acts as the Proton acceptor in catalysis.

This sequence belongs to the short-chain dehydrogenases/reductases (SDR) family.

It carries out the reaction (4R)-hydroxy-(6R)-2,2,6-trimethylcyclohexanone + NAD(+) = (6R)-2,2,6-trimethyl-1,4-cyclohexanedione + NADH + H(+). Strongly activated by monovalent cations, such as K(+), Na(+), and NH4(+). Functionally, catalyzes the regio- and stereoselective reversible NAD-dependent reduction of (6R)-2,2,6-trimethyl-1,4-cyclohexanedione (levodione) to (4R,6R)-4-hydroxy-2,2,6-trimethylcyclohexanone (actinol). The sequence is that of Levodione reductase (lvr) from Leifsonia aquatica (Corynebacterium aquaticum).